We begin with the raw amino-acid sequence, 383 residues long: Transcription factor Sox-17-alpha (383 aa).

Disordered stretches follow at residues 1–20 (MSSP…KCSV) and 37–58 (NSLG…GKAE). The HMG box DNA-binding region spans 61-129 (IRRPMNAFMV…QHMQDHPNYK (69 aa)). The 116-residue stretch at 267 to 382 (GSPVQGMMGC…TAVYYCNYPS (116 aa)) folds into the Sox C-terminal domain. A 9aaTAD motif is present at residues 331–339 (TEFEQYLSY). A required for transcriptional activity and interaction with ctnnb1 region spans residues 332–337 (EFEQYL).

In terms of assembly, interacts (via C-terminus) with ctnnb1/beta-catenin (via Armadillo repeats); this interaction is required for inhibition of wnt-signaling. As to expression, expressed throughout the deep and superficial endoderm during gastrulation. During neural and early tail bud stages, expression declines significantly in the anterior endoderm, except in the endoderm behind the cement gland. Strong expression persists in the endoderm posterior to the liver diverticulum until late tail bud stage. By late tailbud, expression is undetectable in most of the endoderm but is maintained in the presumptive gall bladder region and the extreme posterior region. In addition, expressed in endothelial cells in the head and along the flank of the embryo.

Its subcellular location is the nucleus. Transcription activator. Binds to the DNA sequence 5'-AACAAT-3'. All of the sox17 proteins are required for embryonic endoderm development and gastrulation movements, and show some redundancy in function. In addition, the sox17 proteins have distinct but overlapping roles in later gut development. Acts downstream of vegt-signaling in endoderm differentiation to induce a range of endodermal genes both directly (including endodermin and dhh/chh) and indirectly. Also represses wnt-responsive genes to inhibit wnt/beta-catenin signaling. This is Transcription factor Sox-17-alpha (sox17a) from Xenopus tropicalis (Western clawed frog).